A 262-amino-acid polypeptide reads, in one-letter code: Polyamine aminopropyltransferase (262 aa).

The PABS domain occupies 1–249 (MWITQEITPY…DIHRAAFALP (249 aa)). Asn-29 is a binding site for S-methyl-5'-thioadenosine. Asp-83 provides a ligand contact to spermidine. Asp-155 (proton acceptor) is an active-site residue.

Homodimer.

The protein resides in the cytoplasm. The enzyme catalyses S-adenosyl 3-(methylsulfanyl)propylamine + putrescine = S-methyl-5'-thioadenosine + spermidine + H(+). It participates in amine and polyamine biosynthesis; spermidine biosynthesis; spermidine from putrescine: step 1/1. Inhibited by methylglyoxal bis(cyclopentylamidinohydrazone)(MGBCP). Its function is as follows. Involved in the cell growth and proliferation. Catalyzes the irreversible transfer of a propylamine group from the amino donor S-adenosylmethioninamine (decarboxy-AdoMet) to putrescine (1,4-diaminobutane) to yield spermidine. Spermidine cannot be used as an aminopropyl acceptor. This is Polyamine aminopropyltransferase from Helicobacter pylori (strain ATCC 700392 / 26695) (Campylobacter pylori).